The following is a 267-amino-acid chain: Small ribosomal subunit protein uS2 (267 aa).

Positions 225–267 (LREQELEGEEQEEAAPATEEEKKELIEEAVAEGEAEETEEEEK) are disordered. Residues 251–267 (EEAVAEGEAEETEEEEK) are compositionally biased toward acidic residues.

It belongs to the universal ribosomal protein uS2 family.

The chain is Small ribosomal subunit protein uS2 from Nitratiruptor sp. (strain SB155-2).